A 112-amino-acid polypeptide reads, in one-letter code: ATP synthase epsilon chain (112 aa).

This sequence belongs to the ATPase epsilon chain family. In terms of assembly, F-type ATPases have 2 components, CF(1) - the catalytic core - and CF(0) - the membrane proton channel. CF(1) has five subunits: alpha(3), beta(3), gamma(1), delta(1), epsilon(1). CF(0) has three main subunits: a, b and c.

Its subcellular location is the cell inner membrane. Its function is as follows. Produces ATP from ADP in the presence of a proton gradient across the membrane. The protein is ATP synthase epsilon chain (atpC) of Rickettsia conorii (strain ATCC VR-613 / Malish 7).